The primary structure comprises 360 residues: Dehydrogenase mokE (360 aa).

50–53 (SDTK) contributes to the NADP(+) binding site. 134 to 141 (AGISTAGL) lines the substrate pocket. Residues 173–176 (STAT), 196–199 (SPHN), Y214, 261–262 (LN), and T279 each bind NADP(+). 281 to 285 (GPTIF) contacts substrate. 350-351 (LS) contributes to the NADP(+) binding site.

It belongs to the zinc-containing alcohol dehydrogenase family. As to quaternary structure, monomer.

The protein operates within polyketide biosynthesis; lovastatin biosynthesis. Functionally, dehydrogenase; part of the gene cluster that mediates the biosynthesis of monakolin K, also known as lovastatin, and which acts as a potent competitive inhibitor of HMG-CoA reductase. Monakolin K biosynthesis is performed in two stages. The first stage is catalyzed by the nonaketide synthase mokA, which belongs to type I polyketide synthases and catalyzes the iterative nine-step formation of the polyketide. This PKS stage is completed by the action of dehydrogenase mokE, which catalyzes the NADPH-dependent reduction of the unsaturated tetra-, penta- and heptaketide intermediates that arise during the mokA-mediated biosynthesis of the nonaketide chain and leads to dihydromonacolin L. Covalently bound dihydromonacolin L is released from mokA by the mokD esterase. Conversion of dihydromonacolin L into monacolin L and then monacolin J is subsequently performed with the participation of molecular oxygen and P450 monoogygenase mokC. Finally, mokF performs the conversion of monacoline J to monacoline K through the addition of the side-chain diketide moiety (2R)-2-methylbutanoate produced by the diketide synthase mokB. The polypeptide is Dehydrogenase mokE (Monascus pilosus (Red mold)).